The primary structure comprises 408 residues: Acetate kinase (408 aa).

Mg(2+) is bound at residue Asn-7. Lys-14 lines the ATP pocket. A substrate-binding site is contributed by Arg-91. The Proton donor/acceptor role is filled by Asp-148. Residues 208 to 212 (HLGNG), 283 to 285 (DFR), and 331 to 335 (GIGEN) each bind ATP. Residue Glu-384 participates in Mg(2+) binding.

This sequence belongs to the acetokinase family. As to quaternary structure, homodimer. Mg(2+) serves as cofactor. The cofactor is Mn(2+).

Its subcellular location is the cytoplasm. The enzyme catalyses acetate + ATP = acetyl phosphate + ADP. It participates in metabolic intermediate biosynthesis; acetyl-CoA biosynthesis; acetyl-CoA from acetate: step 1/2. In terms of biological role, catalyzes the formation of acetyl phosphate from acetate and ATP. Can also catalyze the reverse reaction. The sequence is that of Acetate kinase from Methanosarcina mazei (Methanosarcina frisia).